A 231-amino-acid chain; its full sequence is Ion-translocating oxidoreductase complex subunit E (231 aa).

The next 6 helical transmembrane spans lie at Ala-18–Ala-38, Leu-39–Leu-59, Thr-63–Val-83, Leu-86–Val-106, Ala-125–Leu-145, and Pro-182–Gly-202.

It belongs to the NqrDE/RnfAE family. In terms of assembly, the complex is composed of six subunits: RsxA, RsxB, RsxC, RsxD, RsxE and RsxG.

It is found in the cell inner membrane. Part of a membrane-bound complex that couples electron transfer with translocation of ions across the membrane. Required to maintain the reduced state of SoxR. This Escherichia coli O127:H6 (strain E2348/69 / EPEC) protein is Ion-translocating oxidoreductase complex subunit E.